A 310-amino-acid polypeptide reads, in one-letter code: 4-hydroxythreonine-4-phosphate dehydrogenase (310 aa).

2 residues coordinate substrate: H126 and T127. A divalent metal cation-binding residues include H156, H195, and H251. Substrate contacts are provided by K259, N268, and R277.

This sequence belongs to the PdxA family. Homodimer. Requires Zn(2+) as cofactor. Mg(2+) serves as cofactor. Co(2+) is required as a cofactor.

Its subcellular location is the cytoplasm. The enzyme catalyses 4-(phosphooxy)-L-threonine + NAD(+) = 3-amino-2-oxopropyl phosphate + CO2 + NADH. It functions in the pathway cofactor biosynthesis; pyridoxine 5'-phosphate biosynthesis; pyridoxine 5'-phosphate from D-erythrose 4-phosphate: step 4/5. Functionally, catalyzes the NAD(P)-dependent oxidation of 4-(phosphooxy)-L-threonine (HTP) into 2-amino-3-oxo-4-(phosphooxy)butyric acid which spontaneously decarboxylates to form 3-amino-2-oxopropyl phosphate (AHAP). The sequence is that of 4-hydroxythreonine-4-phosphate dehydrogenase from Helicobacter acinonychis (strain Sheeba).